The following is a 364-amino-acid chain: C2 calcium-dependent domain-containing protein 4A (364 aa).

Disordered stretches follow at residues 118–175 (GSPS…PPRC) and 192–242 (AGRS…RPER). Residues 220–233 (SPGSPTQAPVTSLS) show a composition bias toward polar residues. The C2 domain occupies 254–364 (AGGALRLAAE…ELLLGPLLLL (111 aa)).

It belongs to the C2CD4 family.

Its subcellular location is the nucleus. In terms of biological role, may be involved in inflammatory process. May regulate cell architecture and adhesion. This is C2 calcium-dependent domain-containing protein 4A (C2CD4A) from Bos taurus (Bovine).